A 166-amino-acid polypeptide reads, in one-letter code: MPPKLDPSQIVDVYVRVTGGEVGAASSLAPKIGPLGLAPKKIGEDIAKETAKEWKGLRVTVKLTVQNRQAKVTVVPSAAALVIKALKEPERDRKKVKNIKHNGNISFDDVIEIAKIMRPRSIAKELSGTVKEILGTCVSVGCTVDGKDPKDLQEEINSGDIDIPNE.

This sequence belongs to the universal ribosomal protein uL11 family.

In terms of biological role, binds directly to 26S ribosomal RNA. This chain is Large ribosomal subunit protein uL11x (RPL12C), found in Arabidopsis thaliana (Mouse-ear cress).